We begin with the raw amino-acid sequence, 302 residues long: DNA-directed RNA polymerase II subunit rpb3 (302 aa).

It belongs to the archaeal Rpo3/eukaryotic RPB3 RNA polymerase subunit family. As to quaternary structure, component of the RNA polymerase II (Pol II) complex consisting of 12 subunits.

The protein resides in the nucleus. DNA-dependent RNA polymerase catalyzes the transcription of DNA into RNA using the four ribonucleoside triphosphates as substrates. Component of RNA polymerase II which synthesizes mRNA precursors and many functional non-coding RNAs. Pol II is the central component of the basal RNA polymerase II transcription machinery. It is composed of mobile elements that move relative to each other. Rpb3 is part of the core element with the central large cleft and the clamp element that moves to open and close the cleft. In Dictyostelium discoideum (Social amoeba), this protein is DNA-directed RNA polymerase II subunit rpb3 (polr2c).